The primary structure comprises 281 residues: Energy-coupling factor transporter ATP-binding protein EcfA2 (281 aa).

In terms of domain architecture, ABC transporter spans 3–242 (IKVTGLTYVY…TETLEEIGLA (240 aa)). 40-47 (GHTGSGKS) contacts ATP.

It belongs to the ABC transporter superfamily. Energy-coupling factor EcfA family. Forms a stable energy-coupling factor (ECF) transporter complex composed of 2 membrane-embedded substrate-binding proteins (S component), 2 ATP-binding proteins (A component) and 2 transmembrane proteins (T component).

The protein localises to the cell membrane. Functionally, ATP-binding (A) component of a common energy-coupling factor (ECF) ABC-transporter complex. Unlike classic ABC transporters this ECF transporter provides the energy necessary to transport a number of different substrates. The sequence is that of Energy-coupling factor transporter ATP-binding protein EcfA2 from Acetivibrio thermocellus (strain ATCC 27405 / DSM 1237 / JCM 9322 / NBRC 103400 / NCIMB 10682 / NRRL B-4536 / VPI 7372) (Clostridium thermocellum).